Reading from the N-terminus, the 529-residue chain is Type I restriction enzyme StySJI methylase subunit (529 aa).

S-adenosyl-L-methionine-binding positions include 148–153 (QYFTPR), 178–180 (TAG), and E216. Positions 405–444 (YGEDPHGLSPREEGEWSFNAEESEVADSEENKNTDQHQAT) are disordered. Residues 407-418 (EDPHGLSPREEG) show a composition bias toward basic and acidic residues.

It belongs to the N(4)/N(6)-methyltransferase family. In terms of assembly, the type I restriction/modification system is composed of three polypeptides R, M and S; the restriction enzyme has stoichiometry R(2)M(2)S(1) while the methyltransferase is M(2)S(1).

The catalysed reaction is a 2'-deoxyadenosine in DNA + S-adenosyl-L-methionine = an N(6)-methyl-2'-deoxyadenosine in DNA + S-adenosyl-L-homocysteine + H(+). Its function is as follows. The subtype gamma methyltransferase (M) subunit of a type I restriction enzyme. The M and S subunits together form a methyltransferase (MTase) that methylates two adenine residues of the sequence 5'-GAGN(6)GTRC-3'. In the presence of the R subunit the complex can also act as an endonuclease, binding to the same target sequence but cutting the DNA some distance from this site. Whether the DNA is cut or modified depends on the methylation state of the target sequence. When the target site is unmodified, the DNA is cut. When the target site is hemimethylated, the complex acts as a maintenance MTase modifying the DNA so that both strands become methylated. After locating a non-methylated recognition site, the enzyme complex serves as a molecular motor that translocates DNA in an ATP-dependent manner until a collision occurs that triggers cleavage. In Salmonella typhimurium (strain LT2 / SGSC1412 / ATCC 700720), this protein is Type I restriction enzyme StySJI methylase subunit.